A 463-amino-acid polypeptide reads, in one-letter code: Mitochondrial dynamics protein MID51 (463 aa).

Over 1–23 (MAGAGERKGKKDDNGIGTAIDFV) the chain is Mitochondrial intermembrane. The chain crosses the membrane as a helical span at residues 24 to 46 (LSNARLVLGVGGAAMLGIATLAV). At 47–463 (KRMYDRAISA…LSEPEVLLQT (417 aa)) the chain is on the cytoplasmic side. A dimerization region spans residues 49 to 195 (MYDRAISAPT…LSGSLYDDLQ (147 aa)). Phosphoserine occurs at positions 55, 59, 79, and 94. Residues 57 to 79 (PTSPTRLSHSGKRSWEEPNWMGS) are disordered. A disordered region spans residues 104-123 (AFDTDTFCPPRPKPVARKGQ). Residues 160 to 169 (AAVDICAELR) are important for interaction with DNM1L. Residues S187, S189, and H201 each coordinate ADP. Residues 234–243 (RRENPEYFPR) are important for interaction with DNM1L. ADP-binding residues include S340, R342, and K368.

It belongs to the MID49/MID51 family. Homodimer. Interacts with DNM1L.

The protein localises to the mitochondrion outer membrane. In terms of biological role, mitochondrial outer membrane protein which regulates mitochondrial fission/fusion dynamics. Promotes the recruitment and association of the fission mediator dynamin-related protein 1 (DNM1L) to the mitochondrial surface independently of the mitochondrial fission FIS1 and MFF proteins. Regulates DNM1L GTPase activity and DNM1L oligomerization. Binds ADP and can also bind GDP, although with lower affinity. Does not bind CDP, UDP, ATP, AMP or GTP. Inhibits DNM1L GTPase activity in the absence of bound ADP. Requires ADP to stimulate DNM1L GTPase activity and the assembly of DNM1L into long, oligomeric tubules with a spiral pattern, as opposed to the ring-like DNM1L oligomers observed in the absence of bound ADP. Does not require ADP for its function in recruiting DNM1L. This chain is Mitochondrial dynamics protein MID51 (MIEF1), found in Pongo abelii (Sumatran orangutan).